The primary structure comprises 298 residues: Ribosomal protein L11 methyltransferase (298 aa).

S-adenosyl-L-methionine contacts are provided by threonine 139, glycine 163, aspartate 185, and asparagine 232.

Belongs to the methyltransferase superfamily. PrmA family.

It localises to the cytoplasm. It catalyses the reaction L-lysyl-[protein] + 3 S-adenosyl-L-methionine = N(6),N(6),N(6)-trimethyl-L-lysyl-[protein] + 3 S-adenosyl-L-homocysteine + 3 H(+). Functionally, methylates ribosomal protein L11. The polypeptide is Ribosomal protein L11 methyltransferase (Gloeothece citriformis (strain PCC 7424) (Cyanothece sp. (strain PCC 7424))).